Here is a 285-residue protein sequence, read N- to C-terminus: uncharacterized protein (285 aa).

Disordered regions lie at residues alanine 115 to asparagine 139 and glutamate 152 to valine 183. 2 stretches are compositionally biased toward basic and acidic residues: residues lysine 128–arginine 138 and glutamate 152–threonine 170.

This is an uncharacterized protein from Escherichia coli (strain K12).